Reading from the N-terminus, the 89-residue chain is Small ribosomal subunit protein uS14A (89 aa).

Belongs to the universal ribosomal protein uS14 family. In terms of assembly, part of the 30S ribosomal subunit. Contacts proteins S3 and S10.

In terms of biological role, binds 16S rRNA, required for the assembly of 30S particles and may also be responsible for determining the conformation of the 16S rRNA at the A site. The polypeptide is Small ribosomal subunit protein uS14A (Pediococcus pentosaceus (strain ATCC 25745 / CCUG 21536 / LMG 10740 / 183-1w)).